Consider the following 622-residue polypeptide: Probable ATP-dependent RNA helicase DDX41 (622 aa).

The segment covering 1-15 has biased composition (basic and acidic residues); that stretch reads MEDSEPERKRARADE. 2 disordered regions span residues 1-39 and 51-84; these read MEDS…YVPL and LQRR…PQSN. Ser4 bears the Phosphoserine mark. Lys9 is modified (N6-acetyllysine). A Glycyl lysine isopeptide (Lys-Gly) (interchain with G-Cter in ubiquitin) cross-link involves residue Lys9. 2 positions are modified to phosphoserine: Ser21 and Ser23. Residues 24–33 show a composition bias toward acidic residues; that stretch reads EDEDEDDEDY. Tyr33 is subject to Phosphotyrosine. Lys115 is covalently cross-linked (Glycyl lysine isopeptide (Lys-Gly) (interchain with G-Cter in ubiquitin)). The short motif at 181 to 209 is the Q motif element; that stretch reads KSFKEMKFPAAILRGLKKKGILHPTPIQI. The Helicase ATP-binding domain occupies 212–396; the sequence is IPTILSGRDM…KSALVKPVTI (185 aa). 225–232 contacts ATP; the sequence is AFTGSGKT. The short motif at 344–347 is the DEAD box element; that stretch reads DEAD. Residues 407-567 enclose the Helicase C-terminal domain; the sequence is DVIQEVEYVK…KVPPVLQVLH (161 aa). Tyr414 carries the phosphotyrosine modification. Residues Lys416 and Lys442 each participate in a glycyl lysine isopeptide (Lys-Gly) (interchain with G-Cter in SUMO2) cross-link. The CCHC-type zinc finger occupies 580–597; it reads RGCAFCGGLGHRITDCPK.

Belongs to the DEAD box helicase family. DDX41 subfamily. Identified in the spliceosome C complex. Interacts with ERCC6. Interacts with FAM50A. Interacts with STING1. Interacts with CGAS. Interacts with several spliceosomes components such as PRP19 or CDC5L. In terms of processing, acetylation at Lys-9 regulates the nuclear/cytoplasmic localization. Phosphorylated by BTK; phosphorylation induces binding to dsDNA and STING1. Post-translationally, 'Lys-48'-linked ubiquitinated and degraded by TRIM21 leading to negative regulation of the innate immune response to intracellular dsDNA.

Its subcellular location is the nucleus. It localises to the cytoplasm. The catalysed reaction is ATP + H2O = ADP + phosphate + H(+). Functionally, multifunctional protein that participates in many aspects of cellular RNA metabolism. Plays pivotal roles in innate immune sensing and hematopoietic homeostasis. Recognizes foreign or self-nucleic acids generated during microbial infection, thereby initiating anti-pathogen responses. Mechanistically, phosphorylation by BTK allows binding to dsDNA leading to interaction with STING1. Modulates the homeostasis of dsDNA through its ATP-dependent DNA-unwinding activity and ATP-independent strand-annealing activity. In turn, induces STING1-mediated type I interferon and cytokine responses to DNA and DNA viruses. During murine leukemia virus infection, primarily senses the DNA/RNA hybrid generated at the first step of reverse transcription, while cGAS recognizes dsDNA generated at the next step and both are needed for the antiretroviral innate immune response. Selectively modulates the transcription of certain immunity-associated genes by regulating their alternative splicing. Binds to RNA (R)-loops, structures consisting of DNA/RNA hybrids and a displaced strand of DNA that occur during transcription, and prevents their accumulation, thereby maintaining genome stability. Also participates in pre-mRNA splicing, translational regulation and snoRNA processing, which is essential for ribosome biogenesis. The chain is Probable ATP-dependent RNA helicase DDX41 (Ddx41) from Mus musculus (Mouse).